We begin with the raw amino-acid sequence, 444 residues long: Probable glycine dehydrogenase (decarboxylating) subunit 1 (444 aa).

Belongs to the GcvP family. N-terminal subunit subfamily. As to quaternary structure, the glycine cleavage system is composed of four proteins: P, T, L and H. In this organism, the P 'protein' is a heterodimer of two subunits.

It catalyses the reaction N(6)-[(R)-lipoyl]-L-lysyl-[glycine-cleavage complex H protein] + glycine + H(+) = N(6)-[(R)-S(8)-aminomethyldihydrolipoyl]-L-lysyl-[glycine-cleavage complex H protein] + CO2. The glycine cleavage system catalyzes the degradation of glycine. The P protein binds the alpha-amino group of glycine through its pyridoxal phosphate cofactor; CO(2) is released and the remaining methylamine moiety is then transferred to the lipoamide cofactor of the H protein. The sequence is that of Probable glycine dehydrogenase (decarboxylating) subunit 1 from Chlorobaculum tepidum (strain ATCC 49652 / DSM 12025 / NBRC 103806 / TLS) (Chlorobium tepidum).